The following is a 237-amino-acid chain: UPF0758 protein Aave_3773 (237 aa).

Positions 115–237 (LFHSPRAVRD…SLSMAEEGLI (123 aa)) constitute an MPN domain. The Zn(2+) site is built by His-186, His-188, and Asp-199. Residues 186 to 199 (HNHPSGQVQPSRAD) carry the JAMM motif motif.

It belongs to the UPF0758 family.

This chain is UPF0758 protein Aave_3773, found in Paracidovorax citrulli (strain AAC00-1) (Acidovorax citrulli).